The primary structure comprises 520 residues: EGF domain-specific O-linked N-acetylglucosamine transferase (520 aa).

The first 16 residues, 1–16 (MPILPILIGILHLSLA), serve as a signal peptide directing secretion. N-linked (GlcNAc...) asparagine glycans are attached at residues Asn-52, Asn-176, and Asn-250. A Required for optimal activity motif is present at residues 292-294 (DVE). Asn-479 carries an N-linked (GlcNAc...) asparagine glycan. The Prevents secretion from ER signature appears at 517–520 (RNEL).

A divalent metal cation serves as cofactor.

The protein resides in the endoplasmic reticulum lumen. It carries out the reaction L-seryl-[protein] + UDP-N-acetyl-alpha-D-glucosamine = 3-O-(N-acetyl-beta-D-glucosaminyl)-L-seryl-[protein] + UDP + H(+). The enzyme catalyses L-threonyl-[protein] + UDP-N-acetyl-alpha-D-glucosamine = 3-O-(N-acetyl-beta-D-glucosaminyl)-L-threonyl-[protein] + UDP + H(+). Catalyzes the transfer of a single N-acetylglucosamine from UDP-GlcNAc to a serine or threonine residue in extracellular proteins resulting in their modification with a beta-linked N-acetylglucosamine (O-GlcNAc). Specifically glycosylates the Thr residue located between the fifth and sixth conserved cysteines of folded EGF-like domains. Involved in epithelial cell adhesion/interaction with the extracellular matrix by mediating glycosylation of proteins in the secretory pathway, such as Dumpy (Dp). The sequence is that of EGF domain-specific O-linked N-acetylglucosamine transferase (Eogt) from Drosophila melanogaster (Fruit fly).